We begin with the raw amino-acid sequence, 241 residues long: Uridylate kinase (241 aa).

14–17 provides a ligand contact to ATP; the sequence is KLSG. The segment at 22–27 is involved in allosteric activation by GTP; that stretch reads GNQGFG. Glycine 56 lines the UMP pocket. Residues glycine 57 and arginine 61 each contribute to the ATP site. Residues aspartate 76 and 137–144 each bind UMP; that span reads TGNPYFTT. ATP is bound by residues threonine 164, tyrosine 170, and aspartate 173.

This sequence belongs to the UMP kinase family. Homohexamer.

It is found in the cytoplasm. It catalyses the reaction UMP + ATP = UDP + ADP. It participates in pyrimidine metabolism; CTP biosynthesis via de novo pathway; UDP from UMP (UMPK route): step 1/1. Allosterically activated by GTP. Inhibited by UTP. In terms of biological role, catalyzes the reversible phosphorylation of UMP to UDP. The polypeptide is Uridylate kinase (Syntrophotalea carbinolica (strain DSM 2380 / NBRC 103641 / GraBd1) (Pelobacter carbinolicus)).